The sequence spans 85 residues: Beta-insect depressant toxin Lqh-dprIT3a (85 aa).

Residues 1–21 (MKLLLLLTISASMLIEGLVNA) form the signal peptide. Residues 22–82 (DGYIRGGDGC…EWDYETNTCG (61 aa)) enclose the LCN-type CS-alpha/beta domain. 4 disulfides stabilise this stretch: cysteine 31/cysteine 81, cysteine 35/cysteine 56, cysteine 42/cysteine 63, and cysteine 46/cysteine 65. Residue glycine 82 is modified to Glycine amide.

It belongs to the long (4 C-C) scorpion toxin superfamily. Sodium channel inhibitor family. Beta subfamily. In terms of tissue distribution, expressed by the venom gland.

It localises to the secreted. In terms of biological role, depressant insect beta-toxins cause a transient contraction paralysis followed by a slow flaccid paralysis. They bind voltage-independently at site-4 of sodium channels (Nav) and block action potentials, primarily by depolarizing the axonal membrane and suppressing the sodium current. This depressant toxin is active only on insects. It is found in a relatively small amount in the venom, and its activity on insects is 10-fold higher compared to other known depressant toxins. The polypeptide is Beta-insect depressant toxin Lqh-dprIT3a (Leiurus hebraeus (Hebrew deathstalker scorpion)).